The primary structure comprises 256 residues: Small ribosomal subunit protein uS2 (256 aa).

This sequence belongs to the universal ribosomal protein uS2 family.

This chain is Small ribosomal subunit protein uS2, found in Brucella melitensis biotype 1 (strain ATCC 23456 / CCUG 17765 / NCTC 10094 / 16M).